The primary structure comprises 481 residues: Methylenetetrahydrofolate--tRNA-(uracil-5-)-methyltransferase TrmFO (481 aa).

13 to 18 (GGGLAG) lines the FAD pocket.

It belongs to the MnmG family. TrmFO subfamily. The cofactor is FAD.

Its subcellular location is the cytoplasm. It carries out the reaction uridine(54) in tRNA + (6R)-5,10-methylene-5,6,7,8-tetrahydrofolate + NADH + H(+) = 5-methyluridine(54) in tRNA + (6S)-5,6,7,8-tetrahydrofolate + NAD(+). The enzyme catalyses uridine(54) in tRNA + (6R)-5,10-methylene-5,6,7,8-tetrahydrofolate + NADPH + H(+) = 5-methyluridine(54) in tRNA + (6S)-5,6,7,8-tetrahydrofolate + NADP(+). In terms of biological role, catalyzes the folate-dependent formation of 5-methyl-uridine at position 54 (M-5-U54) in all tRNAs. This is Methylenetetrahydrofolate--tRNA-(uracil-5-)-methyltransferase TrmFO from Agrobacterium fabrum (strain C58 / ATCC 33970) (Agrobacterium tumefaciens (strain C58)).